The primary structure comprises 267 residues: Tryptophan synthase alpha chain (267 aa).

Catalysis depends on proton acceptor residues Glu49 and Asp60.

Belongs to the TrpA family. In terms of assembly, tetramer of two alpha and two beta chains.

The catalysed reaction is (1S,2R)-1-C-(indol-3-yl)glycerol 3-phosphate + L-serine = D-glyceraldehyde 3-phosphate + L-tryptophan + H2O. The protein operates within amino-acid biosynthesis; L-tryptophan biosynthesis; L-tryptophan from chorismate: step 5/5. The alpha subunit is responsible for the aldol cleavage of indoleglycerol phosphate to indole and glyceraldehyde 3-phosphate. The chain is Tryptophan synthase alpha chain from Chloroflexus aggregans (strain MD-66 / DSM 9485).